The sequence spans 313 residues: D-alanine--D-alanine ligase (313 aa).

The region spanning 108-308 (KLVWQQTGVP…YSELVVKVLS (201 aa)) is the ATP-grasp domain. 138 to 193 (VAKLGLPLFVKPASEGSSVAVLKVKTADALPAALEEAATHDKIVIVEKSIEGGGEY) provides a ligand contact to ATP. Asp-262, Glu-275, and Asn-277 together coordinate Mg(2+).

The protein belongs to the D-alanine--D-alanine ligase family. It depends on Mg(2+) as a cofactor. Mn(2+) is required as a cofactor.

Its subcellular location is the cytoplasm. The enzyme catalyses 2 D-alanine + ATP = D-alanyl-D-alanine + ADP + phosphate + H(+). It functions in the pathway cell wall biogenesis; peptidoglycan biosynthesis. Cell wall formation. This chain is D-alanine--D-alanine ligase, found in Burkholderia cenocepacia (strain ATCC BAA-245 / DSM 16553 / LMG 16656 / NCTC 13227 / J2315 / CF5610) (Burkholderia cepacia (strain J2315)).